The following is a 207-amino-acid chain: MIRGRIMRKFLILSMLIFTTLCGCVDFSSSNSNGYYHDSWSYNNYTSFVDTHEHYYGKVVKVVDGDTVYVEVNGELWKIRLLGVDTPEIHKRNNPYEYYLLNGTPITDTKYLKEWGYKAKHFAEKELKNKTVIIVFDNEAPKKDKYGRYLAYIFINNSNNLINFNEELLKYGYARVYISNFELKDEFLNVEREAKENRVGLWNWSNN.

Residues R80, E88, and R148 contribute to the active site.

Belongs to the thermonuclease family.

This is an uncharacterized protein from Methanocaldococcus jannaschii (strain ATCC 43067 / DSM 2661 / JAL-1 / JCM 10045 / NBRC 100440) (Methanococcus jannaschii).